Consider the following 714-residue polypeptide: MVLTDSEMEFIRKELGRDPNPLEYGMLDVMFSEHCSYKSSRPVLGLFPTEGEDVIIGPGDDAGVVEITDELALVIGIESHNHPSAIEPYGGAGTGIGGILRDIISMGAMPVALLDSLRFGYLEDQKSRYLFEHVVRGISDYGNRVGVPTVAGEVEFDENFQLNPLVNVMCAGLVPKNDIKRGIAPRPGDVFLLMGGRTGRDGIHGVTFASEELTSSSELEDRPAVQVGDPFTKKMVMEASFEIMDEIEVSGVKDLGGGGLTCCISELVAKCDNGARVSLEAIPLREEGMTPYEIMLSESQERMIFVMAPDDVEAAMEICRKYELPAAVIGEVTDTGRMIVESEGEVIADLPAKLLADPPVVEREARKPQLPEGQVEVKHPPLKDTLLKLISSPNIASKRWVYRQYDHEVQIRTVVKPGDDAAVLRVDGTTGVALTVDCNSIHTKLDPYGGGAASVGEAIRNVVSMGAWPVCIVDCLNFGNPEKPEVFWQFRECVRGMADMAETFSTPVISGNVSFYNETEGVTVNPSPVVGVAGKLSLDSIKTLDFKDEGEEIVVIGETGPELGASEYLRTVHGIVDGKPPETDLKAEFEAAKAVKEIIDGSGNKVTAVHDCSAGGIAVAVAEMAIKSGIGARIDPMKIPGRFRNIHEALFSESNGRYIMTVRGSARDILGGLDVPWAVIGTTGGRTLEFGDVALDISELDDAYHGVIEAYMST.

The active site involves histidine 34. Tyrosine 37 contacts ATP. Glutamate 78 lines the Mg(2+) pocket. Substrate-binding positions include 79-82 (SHNH) and arginine 101. Residue histidine 80 is the Proton acceptor of the active site. Residue aspartate 102 coordinates Mg(2+). Position 226 (glutamine 226) interacts with substrate. Residue aspartate 254 participates in Mg(2+) binding. 298-300 (ESQ) is a substrate binding site. ATP is bound by residues aspartate 474 and glycine 511. Asparagine 512 lines the Mg(2+) pocket. Serine 514 is a substrate binding site.

The protein belongs to the FGAMS family. In terms of assembly, monomer. Part of the FGAM synthase complex composed of 1 PurL, 1 PurQ and 2 PurS subunits.

Its subcellular location is the cytoplasm. The catalysed reaction is N(2)-formyl-N(1)-(5-phospho-beta-D-ribosyl)glycinamide + L-glutamine + ATP + H2O = 2-formamido-N(1)-(5-O-phospho-beta-D-ribosyl)acetamidine + L-glutamate + ADP + phosphate + H(+). Its pathway is purine metabolism; IMP biosynthesis via de novo pathway; 5-amino-1-(5-phospho-D-ribosyl)imidazole from N(2)-formyl-N(1)-(5-phospho-D-ribosyl)glycinamide: step 1/2. In terms of biological role, part of the phosphoribosylformylglycinamidine synthase complex involved in the purines biosynthetic pathway. Catalyzes the ATP-dependent conversion of formylglycinamide ribonucleotide (FGAR) and glutamine to yield formylglycinamidine ribonucleotide (FGAM) and glutamate. The FGAM synthase complex is composed of three subunits. PurQ produces an ammonia molecule by converting glutamine to glutamate. PurL transfers the ammonia molecule to FGAR to form FGAM in an ATP-dependent manner. PurS interacts with PurQ and PurL and is thought to assist in the transfer of the ammonia molecule from PurQ to PurL. This chain is Phosphoribosylformylglycinamidine synthase subunit PurL, found in Methanothermobacter thermautotrophicus (strain ATCC 29096 / DSM 1053 / JCM 10044 / NBRC 100330 / Delta H) (Methanobacterium thermoautotrophicum).